The sequence spans 189 residues: Peptidyl-tRNA hydrolase (189 aa).

Position 15 (Tyr-15) interacts with tRNA. The Proton acceptor role is filled by His-20. Residues Phe-66, Asn-68, and Asn-114 each coordinate tRNA.

This sequence belongs to the PTH family. As to quaternary structure, monomer.

The protein localises to the cytoplasm. The catalysed reaction is an N-acyl-L-alpha-aminoacyl-tRNA + H2O = an N-acyl-L-amino acid + a tRNA + H(+). Hydrolyzes ribosome-free peptidyl-tRNAs (with 1 or more amino acids incorporated), which drop off the ribosome during protein synthesis, or as a result of ribosome stalling. In terms of biological role, catalyzes the release of premature peptidyl moieties from peptidyl-tRNA molecules trapped in stalled 50S ribosomal subunits, and thus maintains levels of free tRNAs and 50S ribosomes. In Streptococcus pneumoniae (strain JJA), this protein is Peptidyl-tRNA hydrolase.